The sequence spans 219 residues: Cytidylate kinase (219 aa).

21-29 (GPAASGKGT) serves as a coordination point for ATP.

This sequence belongs to the cytidylate kinase family. Type 1 subfamily.

It is found in the cytoplasm. It catalyses the reaction CMP + ATP = CDP + ADP. The enzyme catalyses dCMP + ATP = dCDP + ADP. The sequence is that of Cytidylate kinase from Rickettsia akari (strain Hartford).